We begin with the raw amino-acid sequence, 328 residues long: Phosphatidylglycerol--prolipoprotein diacylglyceryl transferase (328 aa).

3 consecutive transmembrane segments (helical) span residues 15 to 35 (VIQGIPITWYSLSYIFIILIS), 58 to 78 (FMFSLVLGAILGGRLASTLVY), and 106 to 126 (GMAIHGGFLGAIIAPLIIINT). Residue arginine 156 coordinates a 1,2-diacyl-sn-glycero-3-phospho-(1'-sn-glycerol). 2 helical membrane-spanning segments follow: residues 242 to 262 (GFIFGIYVMLYAFFRFFIEYL) and 289 to 309 (ISMGQILSLVLMFSGLIWVVV).

It belongs to the Lgt family.

The protein localises to the cell inner membrane. It catalyses the reaction L-cysteinyl-[prolipoprotein] + a 1,2-diacyl-sn-glycero-3-phospho-(1'-sn-glycerol) = an S-1,2-diacyl-sn-glyceryl-L-cysteinyl-[prolipoprotein] + sn-glycerol 1-phosphate + H(+). It participates in protein modification; lipoprotein biosynthesis (diacylglyceryl transfer). Catalyzes the transfer of the diacylglyceryl group from phosphatidylglycerol to the sulfhydryl group of the N-terminal cysteine of a prolipoprotein, the first step in the formation of mature lipoproteins. The sequence is that of Phosphatidylglycerol--prolipoprotein diacylglyceryl transferase from Borrelia garinii subsp. bavariensis (strain ATCC BAA-2496 / DSM 23469 / PBi) (Borreliella bavariensis).